A 475-amino-acid polypeptide reads, in one-letter code: Serralysin G (475 aa).

Residues 1-14 constitute a propeptide that is removed on maturation; sequence MALYGKKTDLSSAS. A Zn(2+)-binding site is contributed by H186. E187 is an active-site residue. Zn(2+) contacts are provided by H190 and Y226. Residues R261, G263, T265, D293, G295, G296, D298, E337, G342, G344, D346, N351, N355, G359, G360, A361, G362, D364, G368, G370, G371, D373, G377, G378, A379, G380, D382, D391, D398, and D408 each coordinate Ca(2+). Hemolysin-type calcium-binding repeat units follow at residues 340 to 357 and 358 to 375; these read IGGSGHDVIVGNLSDNRI and DGGAGNDVLYGDGGADIL.

It belongs to the peptidase M10B family. Requires Ca(2+) as cofactor. The cofactor is Zn(2+).

Its subcellular location is the secreted. The enzyme catalyses Preferential cleavage of bonds with hydrophobic residues in P1'.. This chain is Serralysin G (prtG), found in Dickeya chrysanthemi (Pectobacterium chrysanthemi).